The primary structure comprises 207 residues: MNTAPFIAIEGPIGAGKTTLATMLSQKFGFPMINEIVEDNPYLDKFYDNIKEWSFQLEMFFLCHRYKQLEDTSDHFLKKGQPVIADYHIYKNVIFAERTLSPHQLEKYKKIYHLLTDDLPKPNFIIYIKASLPTLLHRIEKRGRPFEKKIETSYLEQLISDYEVAIKQLQEADPELTVLTVDGDSKDFVLNKSDFERIAAHVKELIV.

Residue 11–19 (GPIGAGKTT) participates in ATP binding. Positions 35 and 47 each coordinate substrate. Catalysis depends on Asp-86, which acts as the Proton acceptor. Glu-147 contributes to the substrate binding site.

It belongs to the DCK/DGK family. As to quaternary structure, homodimer.

The enzyme catalyses 2'-deoxyguanosine + ATP = dGMP + ADP + H(+). Inhibited by deoxyguanosine at concentrations above 30 uM only with UTP as phosphate donor. dGTP is a potent competitive inhibitor. Its function is as follows. Plays an essential role in generating the deoxyribonucleotide precursors dGTP for DNA metabolism. Highly specific toward deoxyguanosine (dGuo) and deoxyinosine (dIno). Only marginal activity is observed with guanosine. UTP is slightly more efficient as phosphate donor than CTP, ATP and GTP. The sequence is that of Deoxyguanosine kinase (dgk) from Bacillus subtilis (strain 168).